A 372-amino-acid chain; its full sequence is NAD(P)H-quinone oxidoreductase subunit 1 (372 aa).

8 helical membrane passes run 27-47, 97-117, 128-148, 176-196, 204-224, 266-286, 308-328, and 347-367; these read IIWL…GVLV, ILFT…WLIV, VGIG…GLLM, LALS…IDIV, ILSW…ICAL, ILSA…PIPV, SIGI…AILL, and FLLP…LALP.

Belongs to the complex I subunit 1 family. In terms of assembly, NDH-1 is composed of at least 11 different subunits.

It is found in the cellular thylakoid membrane. It catalyses the reaction a plastoquinone + NADH + (n+1) H(+)(in) = a plastoquinol + NAD(+) + n H(+)(out). It carries out the reaction a plastoquinone + NADPH + (n+1) H(+)(in) = a plastoquinol + NADP(+) + n H(+)(out). Its function is as follows. NDH-1 shuttles electrons from an unknown electron donor, via FMN and iron-sulfur (Fe-S) centers, to quinones in the respiratory and/or the photosynthetic chain. The immediate electron acceptor for the enzyme in this species is believed to be plastoquinone. Couples the redox reaction to proton translocation, and thus conserves the redox energy in a proton gradient. In Prochlorococcus marinus (strain MIT 9515), this protein is NAD(P)H-quinone oxidoreductase subunit 1.